A 328-amino-acid chain; its full sequence is L-lactate dehydrogenase (328 aa).

Residues valine 18, glutamate 39, lysine 46, tyrosine 71, and 85 to 86 (GA) each bind NAD(+). Positions 88 and 94 each coordinate substrate. NAD(+)-binding positions include serine 107, 124–126 (AAN), and serine 149. 126 to 129 (NPVD) contacts substrate. 154–157 (DSAR) contacts substrate. Arginine 159 and histidine 174 together coordinate beta-D-fructose 1,6-bisphosphate. The active-site Proton acceptor is histidine 181. A Phosphotyrosine modification is found at tyrosine 226. Threonine 235 contacts substrate.

This sequence belongs to the LDH/MDH superfamily. LDH family. Homotetramer.

The protein resides in the cytoplasm. It carries out the reaction (S)-lactate + NAD(+) = pyruvate + NADH + H(+). It participates in fermentation; pyruvate fermentation to lactate; (S)-lactate from pyruvate: step 1/1. Its activity is regulated as follows. Allosterically activated by fructose 1,6-bisphosphate (FBP). Catalyzes the conversion of lactate to pyruvate. The polypeptide is L-lactate dehydrogenase (Streptococcus sanguinis (strain SK36)).